The sequence spans 124 residues: Fluoride-specific ion channel FluC (124 aa).

4 helical membrane-spanning segments follow: residues 5-25 (VYIA…SGFV), 32-52 (SFPY…GLIM), 67-87 (FAIT…SFET), and 96-116 (LLIA…CTWI). Positions 75 and 78 each coordinate Na(+).

Belongs to the fluoride channel Fluc/FEX (TC 1.A.43) family.

It is found in the cell inner membrane. The catalysed reaction is fluoride(in) = fluoride(out). Its activity is regulated as follows. Na(+) is not transported, but it plays an essential structural role and its presence is essential for fluoride channel function. Functionally, fluoride-specific ion channel. Important for reducing fluoride concentration in the cell, thus reducing its toxicity. This Citrifermentans bemidjiense (strain ATCC BAA-1014 / DSM 16622 / JCM 12645 / Bem) (Geobacter bemidjiensis) protein is Fluoride-specific ion channel FluC.